The following is a 442-amino-acid chain: Coiled-coil domain-containing protein 91 (442 aa).

The GGA1-binding motif stretch occupies residues 1-16; the sequence is MDDDDFGGFEAAETFD. The tract at residues 1–27 is disordered; it reads MDDDDFGGFEAAETFDGEQGGNQAVSP. Residues serine 43 and serine 46 each carry the phosphoserine modification. Residues 48 to 79 form a disordered region; it reads ELILDHDRSSPSSGHLRSDAVISSPDDTRADS. Coiled-coil stretches lie at residues 127-213 and 248-409; these read GVHV…ALSI and CEEL…RLDQ. The tract at residues 211-414 is homodimerization; the sequence is LSIIVDEYKA…RRLDQVTRQR (204 aa).

Homodimer. Interacts with GGA1, GGA2 and AP1G1.

The protein resides in the membrane. Its subcellular location is the golgi apparatus. It localises to the trans-Golgi network membrane. It is found in the trans-Golgi network. In terms of biological role, involved in the regulation of membrane traffic through the trans-Golgi network (TGN). Functions in close cooperation with the GGAs in the sorting of hydrolases to lysosomes. In Rattus norvegicus (Rat), this protein is Coiled-coil domain-containing protein 91 (Ccdc91).